Reading from the N-terminus, the 1062-residue chain is NACHT, LRR and PYD domains-containing protein 2 (1062 aa).

The region spanning 1–94 is the Pyrin domain; that stretch reads MVSSAQMGFN…SERAKDEVRE (94 aa). An NACHT domain is found at 207–526; that stretch reads YTVVLYGPAG…LEKEEEEDRD (320 aa). 213–220 contacts ATP; it reads GPAGLGKT. Ser-671 carries the phosphoserine modification. 8 LRR repeats span residues 812-832, 841-861, 869-889, 898-918, 926-946, 955-976, 983-1003, and 1010-1033; these read SLTCVNLSDNELLDEGAKLLY, FLQRLSLENCHLTEANCKDLA, ELTHLCLAKNPIGNTGVKFLC, KLQTLVLWNCDITSDGCCDLT, SLLCLDLGLNHIGVKGMKFLC, NLRCLWLWGCSIPPFSCEDLCS, SLVTLDLGQNPLGSSGVKMLF, and SGTLRTLRLKIDDFNDELNKLLEE.

Belongs to the NLRP family. As to quaternary structure, interacts with CHUK. Interacts with IKBKB. Interacts with IKBKG. Interacts with MEFV. Interacts with PYCARD. Interacts (via pyrin domain) with PYDC2. Interacts with CARD8. As to expression, expressed at high levels in lung, placenta and thymus and at lower levels in ovary, intestine and brain. Highly abundant in oocytes and early embryos, however poorly expressed in somatic tissues such as brain, kidney, liver and spinal cord.

The protein resides in the cytoplasm. Suppresses TNF- and CD40-induced NFKB1 activity at the level of the IKK complex, by inhibiting NFKBIA degradation induced by TNF. When associated with PYCARD, activates CASP1, leading to the secretion of mature pro-inflammatory cytokine IL1B. May be a component of the inflammasome, a protein complex which also includes PYCARD, CARD8 and CASP1 and whose function would be the activation of pro-inflammatory caspases. In Homo sapiens (Human), this protein is NACHT, LRR and PYD domains-containing protein 2 (NLRP2).